Consider the following 196-residue polypeptide: MPKVGMREVRRAQLIDATLLTIDQSGLSGTTLASVAQRANISTGIVSHYFGDKDGLLEATMRHILRDLWAATTRRRIAAKAQPRARLRAIVAANFDVSQVSGPVMKTWLAFWSESMHEPALRRLQHVNTRRLYSNLCAEFAKELPRACARRAASGLAAMIDGLWLRGALSGDPFDTKAALRLANDYIDLLLAQSAA.

The HTH tetR-type domain occupies 8 to 68 (EVRRAQLIDA…ATMRHILRDL (61 aa)). The H-T-H motif DNA-binding region spans 31–50 (TLASVAQRANISTGIVSHYF).

Its pathway is amine and polyamine biosynthesis; betaine biosynthesis via choline pathway [regulation]. In terms of biological role, repressor involved in the biosynthesis of the osmoprotectant glycine betaine. It represses transcription of the choline transporter BetT and the genes of BetAB involved in the synthesis of glycine betaine. In Paraburkholderia phymatum (strain DSM 17167 / CIP 108236 / LMG 21445 / STM815) (Burkholderia phymatum), this protein is HTH-type transcriptional regulator BetI.